A 398-amino-acid chain; its full sequence is Nicotinate phosphoribosyltransferase (398 aa).

His214 carries the phosphohistidine; by autocatalysis modification.

It belongs to the NAPRTase family. Post-translationally, transiently phosphorylated on a His residue during the reaction cycle. Phosphorylation strongly increases the affinity for substrates and increases the rate of nicotinate D-ribonucleotide production. Dephosphorylation regenerates the low-affinity form of the enzyme, leading to product release.

It carries out the reaction nicotinate + 5-phospho-alpha-D-ribose 1-diphosphate + ATP + H2O = nicotinate beta-D-ribonucleotide + ADP + phosphate + diphosphate. The protein operates within cofactor biosynthesis; NAD(+) biosynthesis; nicotinate D-ribonucleotide from nicotinate: step 1/1. In terms of biological role, catalyzes the synthesis of beta-nicotinate D-ribonucleotide from nicotinate and 5-phospho-D-ribose 1-phosphate at the expense of ATP. In Xanthomonas campestris pv. campestris (strain 8004), this protein is Nicotinate phosphoribosyltransferase.